A 173-amino-acid polypeptide reads, in one-letter code: dCTP deaminase, dUMP-forming (173 aa).

DCTP contacts are provided by residues 93–98 (RSSIGR), D111, 119–121 (TLE), Q138, and Y151. E121 serves as the catalytic Proton donor/acceptor.

Belongs to the dCTP deaminase family. In terms of assembly, homotrimer.

It carries out the reaction dCTP + 2 H2O = dUMP + NH4(+) + diphosphate. Its pathway is pyrimidine metabolism; dUMP biosynthesis; dUMP from dCTP: step 1/1. In terms of biological role, bifunctional enzyme that catalyzes both the deamination of dCTP to dUTP and the hydrolysis of dUTP to dUMP without releasing the toxic dUTP intermediate. The sequence is that of dCTP deaminase, dUMP-forming from Clostridium acetobutylicum (strain ATCC 824 / DSM 792 / JCM 1419 / IAM 19013 / LMG 5710 / NBRC 13948 / NRRL B-527 / VKM B-1787 / 2291 / W).